The chain runs to 106 residues: Toxin-like structure LSTX-D7 (106 aa).

The N-terminal stretch at 1 to 20 is a signal peptide; the sequence is MMKVLVVFALLVTLISYSSS. Positions 21–41 are excised as a propeptide; that stretch reads EGIDDLEADELLSLMANEQTR. 4 cysteine pairs are disulfide-bonded: Cys45–Cys60, Cys52–Cys69, Cys59–Cys85, and Cys71–Cys83.

Belongs to the neurotoxin 19 (CSTX) family. 02 (D7) subfamily. As to expression, expressed by the venom gland.

It is found in the secreted. The chain is Toxin-like structure LSTX-D7 from Lycosa singoriensis (Wolf spider).